Reading from the N-terminus, the 355-residue chain is Protein RecA (355 aa).

Position 67–74 (67–74) interacts with ATP; it reads GPESSGKT.

This sequence belongs to the RecA family.

It is found in the cytoplasm. Its function is as follows. Can catalyze the hydrolysis of ATP in the presence of single-stranded DNA, the ATP-dependent uptake of single-stranded DNA by duplex DNA, and the ATP-dependent hybridization of homologous single-stranded DNAs. It interacts with LexA causing its activation and leading to its autocatalytic cleavage. The polypeptide is Protein RecA (Proteus mirabilis (strain HI4320)).